Consider the following 3010-residue polypeptide: MSTNPKPQRKTKRNTNRRPQDVKFPGGGQIVGGVYLLPRRGPRLGVRAPRKTSERSQPRGRRQPIPKARRPEGRTWAQPGYPWPLYGNEGLGWAGWLLSPRGSRPSWGPTDPRRRSRNLGKVIDTLTCGFADLMGYIPLVGAPLGGAARALAHGVRVLEDGVNYATGNLPGCSFSIFLLALLSCLTTPASAYEVHNVSGIYHVTNDCSNASIVYEAADLIMHTPGCVPCVREGNSSRCWVALTPTLAARNVTIPTTTIRRHVDLLVGAAAFCSAMYVGDLCGSVFLVSQLFTFSPRRHVTLQDCNCSIYPGHVSGHRMAWDMMMNWSPTTALVVSQLLRIPQAVVDMVAGAHWGVLAGLAYYSMAGNWAKVLIVMLLFAGVDGDTHVTGGAQAKTTNRLVSMFASGPSQKIQLINTNGSWHINRTALNCNDSLQTGFLAALFYTHSFNSSGCPERMAQCRTIDKFDQGWGPITYAESSRSDQRPYCWHYPPPQCTIVPASEVCGPVYCFTPSPVVVGTTDRFGVPTYRWGENETDVLLLNNTRPPQGNWFGCTWMNSTGFTKTCGGPPCNIGGVGNNTLTCPTDCFRKHPEATYTKCGSGPWLTPRCMVDYPYRLWHYPCTVNFTIFKVRMYVGGVEHRLNAACNWTRGERCDLEDRDRPELSPLLLSTTEWQVLPCSFTTLPALSTGLIHLHQNIVDVQYLYGIGSAVVSFAIKWEYVLLLFLLLADARVCACLWMMLLIAQAEAALENLVVLNSASVAGAHGILSFLVFFCAAWYIKGRLVPGATYALYGVWPLLLLLLALPPRAYAMDREMAASCGGAVFVGLVLLTLSPYYKVFLARLIWWLQYFTTRAEADLHVWIPPLNARGGRDAIILLMCAVHPELIFDITKLLIAILGPLMVLQAGITRVPYFVRAQGLIHACMLVRKVAGGHYVQMAFMKLGALTGTYIYNHLTPLRDWPRAGLRDLAVAVEPVVFSDMETKIITWGADTAACGDIILGLPVSARRGKEILLGPADSLEGRGLRLLAPITAYSQQTRGLLGCIITSLTGRDKNQVEGEVQVVSTATQSFLATCVNGVCWTVYHGAGSKTLAAPKGPITQMYTNVDQDLVGWPKPPGARSLTPCTCGSSDLYLVTRHADVIPVRRRGDSRGSLLSPRPVSYLKGSSGGPLLCPFGHAVGIFRAAVCTRGVAKAVDFVPVESMETTMRSPVFTDNSSPPAVPQSFQVAHLHAPTGSGKSTKVPAAYAAQGYKVLVLNPSVAATLGFGAYMSKAHGIDPNIRTGVRTITTGAPVTYSTYGKFLADGGCSGGAYDIIICDECHSTDSTTILGIGTVLDQAETAGARLVVLATATPPGSVTVPHPNIEEVALSNTGEIPFYGKAIPIEAIRGGRHLIFCHSKKKCDELAAKLSGLGINAVAYYRGLDVSVIPTIGDVVVVATDALMTGYTGDFDSVIDCNTCVTQTVDFSLDPTFTIETTTVPQDAVSRSQRRGRTGRGRRGIYRFVTPGERPSGMFDSSVLCECYDAGCAWYELTPAETSVRLRAYLNTPGLPVCQDHLEFWESVFTGLTHIDAHFLSQTKQAGDNFPYLVAYQATVCARAQAPPPSWDQMWKCLIRLKPTLHGPTPLLYRLGAVQNEVTLTHPITKYIMACMSADLEVVTSTWVLVGGVLAALAAYCLTTGSVVIVGRIILSGRPAIVPDRELLYQEFDEMEECASHLPYIEQGMQLAEQFKQKALGLLQTATKQAEAAAPVVESKWRALETFWAKHMWNFISGIQYLAGLSTLPGNPAIASLMAFTASITSPLTTQSTLLFNILGGWVAAQLAPPSAASAFVGAGIAGAAVGSIGLGKVLVDILAGYGAGVAGALVAFKVMSGEMPSTEDLVNLLPAILSPGALVVGVVCAAILRRHVGPGEGAVQWMNRLIAFASRGNHVSPTHYVPESDAAARVTQILSSLTITQLLKRLHQWINEDCSTPCSGSWLRDVWDWICTVLTDFKTWLQSKLLPQLPGVPFFSCQRGYKGVWRGDGIMQTTCPCGAQITGHVKNGSMRIVGPKTCSNTWHGTFPINAYTTGPCTPSPAPNYSRALWRVAAEEYVEVTRVGDFHYVTGMTTDNVKCPCQVPAPEFFSEVDGVRLHRYAPACRPLLREEVTFQVGLNQYLVGSQLPCEPEPDVAVLTSMLTDPSHITAETAKRRLARGSPPSLASSSASQLSAPSLKATCTTHHVSPDADLIEANLLWRQEMGGNITRVESENKVVVLDSFDPLRAEEDEREVSVPAEILRKSKKFPAAMPIWARPDYNPPLLESWKDPDYVPPVVHGCPLPPIKAPPIPPPRRKRTVVLTESSVSSALAELATKTFGSSESSAVDSGTATALPDQASDDGDKGSDVESYSSMPPLEGEPGDPDLSDGSWSTVSEEASEDVVCCSMSYTWTGALITPCAAEESKLPINALSNSLLRHHNMVYATTSRSAGLRQKKVTFDRLQVLDDHYRDVLKEMKAKASTVKAKLLSVEEACKLTPPHSAKSKFGYGAKDVRNLSSKAVNHIHSVWKDLLEDTVTPIDTTIMAKNEVFCVQPEKGGRKPARLIVFPDLGVRVCEKMALYDVVSTLPQVVMGSSYGFQYSPGQRVEFLVNTWKSKKNPMGFSYDTRCFDSTVTENDIRVEESIYQCCDLAPEARQAIKSLTERLYIGGPLTNSKGQNCGYRRCRASGVLTTSCGNTLTCYLKASAACRAAKLQDCTMLVNGDDLVVICESAGTQEDAASLRVFTEAMTRYSAPPGDPPQPEYDLELITSCSSNVSVAHDASGKRVYYLTRDPTTPLARAAWETARHTPVNSWLGNIIMYAPTLWARMILMTHFFSILLAQEQLEKALDCQIYGACYSIEPLDLPQIIERLHGLSAFSLHSYSPGEINRVASCLRKLGVPPLRVWRHRARSVRARLLSQGGRAATCGKYLFNWAVKTKLKLTPIPAASRLDLSGWFVAGYSGGDIYHSLSRARPRWFMLCLLLLSVGVGIYLLPNR.

S2 carries the post-translational modification N-acetylserine; by host. Residues 2–23 (STNPKPQRKTKRNTNRRPQDVK) are interaction with STAT1. Residues 2 to 58 (STNPKPQRKTKRNTNRRPQDVKFPGGGQIVGGVYLLPRRGPRLGVRAPRKTSERSQP) are interaction with EIF2AK2/PKR. Residues 2–59 (STNPKPQRKTKRNTNRRPQDVKFPGGGQIVGGVYLLPRRGPRLGVRAPRKTSERSQPR) form an interaction with DDX3X region. The segment at 2-75 (STNPKPQRKT…PKARRPEGRT (74 aa)) is disordered. Short sequence motifs (nuclear localization signal) lie at residues 5–13 (PKPQRKTKR) and 38–43 (PRRGPR). The segment covering 7–16 (PQRKTKRNTN) has biased composition (basic residues). Low complexity predominate over residues 32–47 (GGVYLLPRRGPRLGVR). Residue S53 is modified to Phosphoserine; by host. 2 consecutive short sequence motifs (nuclear localization signal) follow at residues 58–64 (PRGRRQP) and 66–71 (PKARRP). The span at 58-68 (PRGRRQPIPKA) shows a compositional bias: basic residues. Residue S99 is modified to Phosphoserine; by host. The segment at 112-152 (PRRRSRNLGKVIDTLTCGFADLMGYIPLVGAPLGGAARALA) is important for endoplasmic reticulum and mitochondrial localization. S116 carries the post-translational modification Phosphoserine; by host PKA. The interaction with APOA2 stretch occupies residues 122–173 (VIDTLTCGFADLMGYIPLVGAPLGGAARALAHGVRVLEDGVNYATGNLPGCS). The important for lipid droplets localization stretch occupies residues 164–167 (YATG). The propeptide at 178 to 191 (LLALLSCLTTPASA) is ER anchor for the core protein, removed in mature form by host signal peptidase. Topologically, residues 190–358 (SAYEVHNVSG…AGAHWGVLAG (169 aa)) are lumenal. N-linked (GlcNAc...) asparagine; by host glycans are attached at residues N196, N209, N234, and N250. The important for fusion stretch occupies residues 265–296 (LVGAAAFCSAMYVGDLCGSVFLVSQLFTFSPR). N305 carries N-linked (GlcNAc...) asparagine; by host glycosylation. The chain crosses the membrane as a helical span at residues 359–379 (LAYYSMAGNWAKVLIVMLLFA). The Lumenal segment spans residues 380-725 (GVDGDTHVTG…WEYVLLLFLL (346 aa)). The HVR1 stretch occupies residues 385 to 411 (THVTGGAQAKTTNRLVSMFASGPSQKI). A glycan (N-linked (GlcNAc...) asparagine; by host) is linked at N417. N-linked (GlcNAc...) (high mannose) asparagine; by host glycans are attached at residues N423, N430, and N448. Disulfide bonds link C429–C552, C452–C459, C486–C494, and C503–C508. Residues 474 to 482 (YAESSRSDQ) are HVR2. The tract at residues 480–494 (SDQRPYCWHYPPPQC) is CD81-binding 1. N-linked (GlcNAc...) (high mannose) asparagine; by host glycans are attached at residues N532 and N540. The tract at residues 544–552 (PPQGNWFGC) is CD81-binding 2. Residue N556 is glycosylated (N-linked (GlcNAc...) (high mannose) asparagine; by host). Cysteines 564 and 569 form a disulfide. Residue N576 is glycosylated (N-linked (GlcNAc...) (high mannose) asparagine; by host). 3 disulfide bridges follow: C581–C585, C597–C620, and C607–C644. 2 N-linked (GlcNAc...) (high mannose) asparagine; by host glycosylation sites follow: N623 and N645. Residues C652 and C677 are joined by a disulfide bond. The interval 660 to 671 (PELSPLLLSTTE) is EIF2AK2/eIF2-alpha phosphorylation homology domain (PePHD). Residues 726 to 746 (LADARVCACLWMMLLIAQAEA) form a helical membrane-spanning segment. Topologically, residues 747–757 (ALENLVVLNSA) are lumenal. The chain crosses the membrane as a helical span at residues 758–778 (SVAGAHGILSFLVFFCAAWYI). Over 779–781 (KGR) the chain is Cytoplasmic. A helical transmembrane segment spans residues 782 to 803 (LVPGATYALYGVWPLLLLLLAL). The Lumenal segment spans residues 804–813 (PPRAYAMDRE). Residues 814–834 (MAASCGGAVFVGLVLLTLSPY) traverse the membrane as a helical segment. The Cytoplasmic segment spans residues 835 to 838 (YKVF). A helical membrane pass occupies residues 839–859 (LARLIWWLQYFTTRAEADLHV). Residues 860 to 881 (WIPPLNARGGRDAIILLMCAVH) lie on the Lumenal side of the membrane. The helical transmembrane segment at 882–902 (PELIFDITKLLIAILGPLMVL) threads the bilayer. In terms of domain architecture, Peptidase C18 spans 903 to 1026 (QAGITRVPYF…SLEGRGLRLL (124 aa)). The Cytoplasmic portion of the chain corresponds to 903 to 1657 (QAGITRVPYF…CMSADLEVVT (755 aa)). Residues 904 to 1206 (AGITRVPYFV…PVESMETTMR (303 aa)) form a protease NS2-3 region. C922 is lipidated: S-palmitoyl cysteine; by host. Residues 929-949 (AGGHYVQMAFMKLGALTGTYI) form an interaction with host SCPS1 region. Catalysis depends on for protease NS2 activity; shared with dimeric partner residues H952, E972, and C993. The Peptidase S29 domain maps to 1027-1208 (APITAYSQQT…ESMETTMRSP (182 aa)). Residues H1083 and D1107 each act as charge relay system; for serine protease NS3 activity in the active site. Zn(2+) contacts are provided by C1123 and C1125. The active-site Charge relay system; for serine protease NS3 activity is the S1165. Residues C1171 and H1175 each coordinate Zn(2+). The 153-residue stretch at 1217-1369 (PAVPQSFQVA…PNIEEVALSN (153 aa)) folds into the Helicase ATP-binding domain. 1230–1237 (APTGSGKS) contributes to the ATP binding site. 2 residues coordinate Mg(2+): S1237 and E1317. A DECH box motif is present at residues 1316–1319 (DECH). Residues 1486 to 1497 (QRRGRTGRGRRG) form an RNA-binding region. The chain crosses the membrane as a helical span at residues 1658–1678 (STWVLVGGVLAALAAYCLTTG). Residues 1679-1690 (SVVIVGRIILSG) are NS3-binding. Residues 1679–1805 (SVVIVGRIIL…SITSPLTTQS (127 aa)) are Cytoplasmic-facing. Residues 1806 to 1826 (TLLFNILGGWVAAQLAPPSAA) form a helical membrane-spanning segment. The Lumenal segment spans residues 1827–1828 (SA). A helical membrane pass occupies residues 1829–1849 (FVGAGIAGAAVGSIGLGKVLV). The glycine zipper stretch occupies residues 1833–1861 (GIAGAAVGSIGLGKVLVDILAGYGAGVAG). Position 1850 (D1850) is a topological domain, cytoplasmic. A helical membrane pass occupies residues 1851–1871 (ILAGYGAGVAGALVAFKVMSG). The Lumenal portion of the chain corresponds to 1872–1881 (EMPSTEDLVN). A helical transmembrane segment spans residues 1882-1902 (LLPAILSPGALVVGVVCAAIL). The Cytoplasmic portion of the chain corresponds to 1903–1972 (RRHVGPGEGA…WINEDCSTPC (70 aa)). S-palmitoyl cysteine; by host attachment occurs at residues C1968 and C1972. The stretch at 1973 to 2003 (SGSWLRDVWDWICTVLTDFKTWLQSKLLPQL) is an intramembrane region. The segment at 1978–1998 (RDVWDWICTVLTDFKTWLQSK) is membrane-binding. The Cytoplasmic segment spans residues 2004–2989 (PGVPFFSCQR…YHSLSRARPR (986 aa)). The segment at 2005–2221 (GVPFFSCQRG…KATCTTHHVS (217 aa)) is RNA-binding. Residues C2011, C2029, C2031, and C2052 each coordinate Zn(2+). Residues 2120 to 2208 (EFFSEVDGVR…ASSSASQLSA (89 aa)) are FKBP8-binding. Positions 2120–2332 (EFFSEVDGVR…PIPPPRRKRT (213 aa)) are transcriptional activation. The interaction with non-structural protein 4A stretch occupies residues 2135–2139 (PACRP). An interaction with host SKP2 region spans residues 2189–2441 (RLARGSPPSL…PCAAEESKLP (253 aa)). S2194 carries the post-translational modification Phosphoserine; by host; in p56. 5 positions are modified to phosphoserine; by host; in p58: S2197, S2201, S2204, S2207, and S2210. The ISDR stretch occupies residues 2210–2249 (SLKATCTTHHVSPDADLIEANLLWRQEMGGNITRVESENK). Residues 2210-2275 (SLKATCTTHH…REVSVPAEIL (66 aa)) form an EIF2AK2/PKR-binding region. The interval 2249–2306 (KVVVLDSFDPLRAEEDEREVSVPAEILRKSKKFPAAMPIWARPDYNPPLLESWKDPDY) is NS4B-binding. Positions 2322–2325 (PPIP) match the SH3-binding motif. The Nuclear localization signal signature appears at 2326-2334 (PPRRKRTVV). The segment at 2332 to 2441 (TVVLTESSVS…PCAAEESKLP (110 aa)) is interaction with host IFI27. Residue K2350 forms a Glycyl lysine isopeptide (Lys-Gly) (interchain with G-Cter in ubiquitin) linkage. Polar residues predominate over residues 2351–2365 (TFGSSESSAVDSGTA). A disordered region spans residues 2351–2407 (TFGSSESSAVDSGTATALPDQASDDGDKGSDVESYSSMPPLEGEPGDPDLSDGSWST). A V3 region spans residues 2354-2377 (SSESSAVDSGTATALPDQASDDGD). 2 positions are modified to phosphoserine; by host: S2448 and S2461. The RdRp catalytic domain maps to 2633–2751 (PMGFSYDTRC…ICESAGTQED (119 aa)). Mg(2+) contacts are provided by D2639, D2737, and D2738. A helical transmembrane segment spans residues 2990–3010 (WFMLCLLLLSVGVGIYLLPNR).

This sequence belongs to the hepacivirus polyprotein family. In terms of assembly, homooligomer. Interacts with E1 (via C-terminus). Interacts with the non-structural protein 5A. Interacts (via N-terminus) with host STAT1 (via SH2 domain); this interaction results in decreased STAT1 phosphorylation and ubiquitin-mediated proteasome-dependent STAT1 degradation, leading to decreased IFN-stimulated gene transcription. Interacts with host STAT3; this interaction constitutively activates STAT3. Associates with host LTBR receptor. Interacts with host TNFRSF1A receptor and possibly induces apoptosis. Interacts with host HNRPK. Interacts with host YWHAE. Interacts with host UBE3A/E6AP. Interacts with host DDX3X. Interacts with host APOA2. Interacts with host RXRA protein. Interacts with host SP110 isoform 3/Sp110b; this interaction sequesters the transcriptional corepressor SP110 away from the nucleus. Interacts with host CREB3 nuclear transcription protein; this interaction triggers cell transformation. Interacts with host ACY3. Interacts with host C1QR1. Interacts with host RBM24; this interaction, which enhances the interaction of the mature core protein with 5'-UTR, may inhibit viral translation and favor replication. Interacts (via N-terminus) with host EIF2AK2/PKR (via N-terminus); this interaction induces the autophosphorylation of EIF2AK2. Part of the viral assembly initiation complex composed of NS2, E1, E2, NS3, NS4A, NS5A and the mature core protein. Forms a heterodimer with envelope glycoprotein E2. Interacts with mature core protein. Interacts with protease NS2. The heterodimer E1/E2 interacts with host CLDN1; this interaction plays a role in viral entry into host cell. Interacts with host SPSB2 (via C-terminus). Part of the viral assembly initiation complex composed of NS2, E1, E2, NS3, NS4A, NS5A and the mature core protein. Interacts with host NEURL3; this interaction prevents E1 binding to glycoprotein E2. As to quaternary structure, forms a heterodimer with envelope glycoprotein E1. Interacts with host CD81 and SCARB1 receptors; these interactions play a role in viral entry into host cell. Interacts with host EIF2AK2/PKR; this interaction inhibits EIF2AK2 and probably allows the virus to evade the innate immune response. Interacts with host CD209/DC-SIGN and CLEC4M/DC-SIGNR. Interact with host SPCS1; this interaction is essential for viral particle assembly. Interacts with protease NS2. The heterodimer E1/E2 interacts with host CLDN1; this interaction plays a role in viral entry into host cell. Part of the viral assembly initiation complex composed of NS2, E1, E2, NS3, NS4A, NS5A and the mature core protein. Interacts with host SLC3A2/4F2hc; the interaction may facilitate viral entry into host cell. Interacts with human PLSCR1. In terms of assembly, homohexamer. Homoheptamer. Interacts with protease NS2. Homodimer. Interacts with host SPCS1; this interaction is essential for viral particle assembly. Interacts with envelope glycoprotein E1. Interacts with envelope glycoprotein E2. Interacts with viroporin p7. Interacts with serine protease/helicase NS3. Part of the replication complex composed of NS2, NS3, NS4A, NS4B, NS5A and the RNA-directed RNA polymerase embedded in an ER-derived membranous web. Part of the viral assembly initiation complex composed of NS2, E1, E2, NS3, NS4A, NS5A and the mature core protein. As to quaternary structure, interacts with protease NS2. Interacts with non-structural protein 4A; this interaction stabilizes the folding of NS3 serine protease. NS3-NS4A interaction is essential for NS3 activation and allows membrane anchorage of the latter. NS3/NS4A complex also prevents phosphorylation of host IRF3, thus preventing the establishment of dsRNA induced antiviral state. Interacts with host MAVS; this interaction leads to the cleavage and inhibition of host MAVS. Interacts with host TICAM1; this interaction leads to the cleavage and inhibition of host TICAM1. Interacts with host TANK-binding kinase/TBK1; this interaction results in the inhibition of the association between TBK1 and IRF3, which leads to the inhibition of IRF3 activation. Interacts with host RBM24. Part of the replication complex composed of NS2, NS3, NS4A, NS4B, NS5A and the RNA-directed RNA polymerase embedded in an ER-derived membranous web. Part of the viral assembly initiation complex composed of NS2, E1, E2, NS3, NS4A, NS5A and the mature core protein. In terms of assembly, interacts with NS3 serine protease; this interaction stabilizes the folding of NS3 serine protease. NS3-NS4A interaction is essential for NS3 activation and allows membrane anchorage of the latter. Interacts with non-structural protein 5A (via N-terminus). Part of the replication complex composed of NS2, NS3, NS4A, NS4B, NS5A and the RNA-directed RNA polymerase embedded in an ER-derived membranous web. Part of the viral assembly initiation complex composed of NS2, E1, E2, NS3, NS4A, NS5A and the mature core protein. Monomer. Homodimer; dimerization is required for RNA-binding. Interacts with the mature core protein. Interacts (via N-terminus) with non-structural protein 4A. Interacts with non-structural protein 4B. Interacts with RNA-directed RNA polymerase. Part of the viral assembly initiation complex composed of NS2, E1, E2, NS3, NS4A, NS5A and the mature core protein. Part of the replication complex composed of NS2, NS3, NS4A, NS4B, NS5A and the RNA-directed RNA polymerase embedded in an ER-derived membranous web. Interacts with host GRB2. Interacts with host BIN1. Interacts with host PIK3R1. Interacts with host SRCAP. Interacts with host FKBP8. Interacts with host VAPB. Interacts with host EIF2AK2/PKR; this interaction leads to disruption of EIF2AK2 dimerization by NS5A and probably allows the virus to evade the innate immune response. Interacts (via N-terminus) with host PACSIN2 (via N-terminus); this interaction attenuates protein kinase C alpha-mediated phosphorylation of PACSIN2 by disrupting the interaction between PACSIN2 and PRKCA. Interacts (via N-terminus) with host SRC kinase (via SH2 domain). Interacts with most Src-family kinases. Interacts with host IFI27 and SKP2; promotes the ubiquitin-mediated proteasomal degradation of NS5A. Interacts with host GPS2. Interacts with host TNFRSF21; this interaction allows the modulation by the virus of JNK, p38 MAPK, STAT3, and Akt signaling pathways in a DR6-dependent manner. Interacts (via N-terminus) with host CIDEB (via N-terminus); this interaction seems to regulate the association of HCV particles with APOE. Interacts with host CHKA/Choline Kinase-alpha; CHKA bridges host PI4KA and NS5A and potentiates NS5A-stimulated PI4KA activity, which then facilitates the targeting of the ternary complex to the ER for viral replication. Interacts with host SPSB2 (via C-terminus); this interaction targets NS5A for ubiquitination and degradation. Interacts with host RAB18; this interaction may promote the association of NS5A and other replicase components with lipid droplets. Interacts (via region D2) with host PPIA/CYPA; the interaction stimulates RNA-binding ability of NS5A and is dependent on the peptidyl-prolyl cis-trans isomerase activity of PPIA/CYPA. Interacts with host TRIM14; this interaction induces the degradation of NS5A. As to quaternary structure, homooligomer. Interacts with non-structural protein 5A. Interacts with host VAPB. Interacts with host PRK2/PKN2. Interacts with host HNRNPA1 and SEPT6; these interactions facilitate the viral replication. Part of the replication complex composed of NS2, NS3, NS4A, NS4B, NS5A and the RNA-directed RNA polymerase embedded in an ER-derived membranous web. Requires Zn(2+) as cofactor. It depends on Mg(2+) as a cofactor. In terms of processing, specific enzymatic cleavages in vivo yield mature proteins. The structural proteins, core, E1, E2 and p7 are produced by proteolytic processing by host signal peptidases. The core protein precursor is synthesized as a 23 kDa, which is retained in the ER membrane through the hydrophobic signal peptide. Cleavage by the signal peptidase releases the 21 kDa mature core protein. The cleavage of the core protein precursor occurs between aminoacids 176 and 188 but the exact cleavage site is not known. Some degraded forms of the core protein appear as well during the course of infection. The other proteins (p7, NS2, NS3, NS4A, NS4B, NS5A and NS5B) are cleaved by the viral proteases. Autoprocessing between NS2 and NS3 is mediated by the NS2 cysteine protease catalytic domain and regulated by the NS3 N-terminal domain. Phosphorylated by host PKC and PKA. Post-translationally, ubiquitinated; mediated by UBE3A and leading to core protein subsequent proteasomal degradation. In terms of processing, highly N-glycosylated. Palmitoylation is required for NS2/3 autoprocessing and E2 recruitment to membranes. Post-translationally, palmitoylated. This modification may play a role in its polymerization or in protein-protein interactions. In terms of processing, phosphorylated on serines in a basal form termed p56. p58 is a hyperphosphorylated form of p56. p56 and p58 coexist in the cell in roughly equivalent amounts. Hyperphosphorylation is dependent on the presence of NS4A. Host CSNK1A1/CKI-alpha or RPS6KB1 kinases may be responsible for NS5A phosphorylation. Tyrosine phosphorylation is essential for the interaction with host SRC. Post-translationally, the N-terminus is phosphorylated by host PRK2/PKN2.

The protein localises to the host endoplasmic reticulum membrane. It is found in the host mitochondrion membrane. Its subcellular location is the virion. The protein resides in the host cytoplasm. It localises to the host nucleus. The protein localises to the host lipid droplet. It is found in the virion membrane. Its subcellular location is the host mitochondrion. The protein resides in the host cell membrane. It localises to the host perinuclear region. The catalysed reaction is Hydrolysis of four peptide bonds in the viral precursor polyprotein, commonly with Asp or Glu in the P6 position, Cys or Thr in P1 and Ser or Ala in P1'.. It catalyses the reaction a ribonucleoside 5'-triphosphate + H2O = a ribonucleoside 5'-diphosphate + phosphate + H(+). It carries out the reaction ATP + H2O = ADP + phosphate + H(+). The enzyme catalyses RNA(n) + a ribonucleoside 5'-triphosphate = RNA(n+1) + diphosphate. Inhibited by the antiviral drug hexamethylene amiloride. Inhibition by amantadine appears to be genotype-dependent. Also inhibited by long-alkyl-chain iminosugar derivatives. With respect to regulation, activity is up-regulated by PRK2/PKN2-mediated phosphorylation. Its activity is regulated as follows. Activity of auto-protease NS2 is dependent on zinc ions and completely inhibited by EDTA, 1,10-phenanthroline, iodocetamide and N-ethylmaleimide. According to PubMed:9261354, completely inhibited by the serine protease inhibitors TLCK and TPCK. According to PubMed:8189501, almost completely inhibited by TPCK and slightly inhibited by TLCK. Not inhibited by antipain, aprotinin, E64, PMSF and pepstatin. Also inhibited by NS2 and NS4A derived peptides. Serine protease/helicase NS3 is also activated by zinc ions. In terms of biological role, packages viral RNA to form a viral nucleocapsid, and promotes virion budding. Participates in the viral particle production as a result of its interaction with the non-structural protein 5A. Binds RNA and may function as a RNA chaperone to induce the RNA structural rearrangements taking place during virus replication. Modulates viral translation initiation by interacting with viral IRES and 40S ribosomal subunit. Affects various cell signaling pathways, host immunity and lipid metabolism. Prevents the establishment of cellular antiviral state by blocking the interferon-alpha/beta (IFN-alpha/beta) and IFN-gamma signaling pathways and by blocking the formation of phosphorylated STAT1 and promoting ubiquitin-mediated proteasome-dependent degradation of STAT1. Activates STAT3 leading to cellular transformation. Regulates the activity of cellular genes, including c-myc and c-fos. May repress the promoter of p53, and sequester CREB3 and SP110 isoform 3/Sp110b in the cytoplasm. Represses cell cycle negative regulating factor CDKN1A, thereby interrupting an important check point of normal cell cycle regulation. Targets transcription factors involved in the regulation of inflammatory responses and in the immune response: suppresses NF-kappa-B activation, and activates AP-1. Binds to dendritic cells (DCs) via C1QR1, resulting in down-regulation of T-lymphocytes proliferation. Alters lipid metabolism by interacting with hepatocellular proteins involved in lipid accumulation and storage. Induces up-regulation of FAS promoter activity, and thereby contributes to the increased triglyceride accumulation in hepatocytes (steatosis). Functionally, forms a heterodimer with envelope glycoprotein E2, which mediates virus attachment to the host cell, virion internalization through clathrin-dependent endocytosis and fusion with host membrane. Fusion with the host cell is most likely mediated by both E1 and E2, through conformational rearrangements of the heterodimer required for fusion rather than a classical class II fusion mechanism. E1/E2 heterodimer binds host apolipoproteins such as APOB and APOE thereby forming a lipo-viro-particle (LVP). APOE associated to the LVP allows the initial virus attachment to cell surface receptors such as the heparan sulfate proteoglycans (HSPGs), syndecan-1 (SDC1), syndecan-1 (SDC2), the low-density lipoprotein receptor (LDLR) and scavenger receptor class B type I (SCARB1). The cholesterol transfer activity of SCARB1 allows E2 exposure and binding of E2 to SCARB1 and the tetraspanin CD81. E1/E2 heterodimer binding on CD81 activates the epithelial growth factor receptor (EGFR) signaling pathway. Diffusion of the complex E1-E2-EGFR-SCARB1-CD81 to the cell lateral membrane allows further interaction with Claudin 1 (CLDN1) and occludin (OCLN) to finally trigger HCV entry. Its function is as follows. Forms a heterodimer with envelope glycoprotein E1, which mediates virus attachment to the host cell, virion internalization through clathrin-dependent endocytosis and fusion with host membrane. Fusion with the host cell is most likely mediated by both E1 and E2, through conformational rearrangements of the heterodimer required for fusion rather than a classical class II fusion mechanism. The interaction between envelope glycoprotein E2 and host apolipoprotein E/APOE allows the proper assembly, maturation and infectivity of the viral particles. This interaction is probably promoted via the up-regulation of cellular autophagy by the virus. E1/E2 heterodimer binds host apolipoproteins such as APOB and APOE thereby forming a lipo-viro-particle (LVP). APOE associated to the LVP allows the initial virus attachment to cell surface receptors such as the heparan sulfate proteoglycans (HSPGs), syndecan-1 (SDC1), syndecan-1 (SDC2), the low-density lipoprotein receptor (LDLR) and scavenger receptor class B type I (SCARB1). The cholesterol transfer activity of SCARB1 allows E2 exposure and binding of E2 to SCARB1 and the tetraspanin CD81. E1/E2 heterodimer binding on CD81 activates the epithelial growth factor receptor (EGFR) signaling pathway. Diffusion of the complex E1-E2-EGFR-SCARB1-CD81 to the cell lateral membrane allows further interaction with Claudin 1 (CLDN1) and occludin (OCLN) to finally trigger HCV entry. Inhibits host EIF2AK2/PKR activation, preventing the establishment of an antiviral state. Viral ligand for CD209/DC-SIGN and CLEC4M/DC-SIGNR, which are respectively found on dendritic cells (DCs), and on liver sinusoidal endothelial cells and macrophage-like cells of lymph node sinuses. These interactions allow the capture of circulating HCV particles by these cells and subsequent facilitated transmission to permissive cells such as hepatocytes and lymphocyte subpopulations. The interaction between E2 and host amino acid transporter complex formed by SLC3A2 and SLC7A5/LAT1 may facilitate viral entry into host cell. Ion channel protein that acts as a viroporin and plays an essential role in the assembly, envelopment and secretion of viral particles. Regulates the host cell secretory pathway, which induces the intracellular retention of viral glycoproteins and favors assembly of viral particles. Creates a pore in acidic organelles and releases Ca(2+) and H(+) in the cytoplasm of infected cells, leading to a productive viral infection. High levels of cytoplasmic Ca(2+) may trigger membrane trafficking and transport of viral ER-associated proteins to viroplasms, sites of viral genome replication. This ionic imbalance induces the assembly of the inflammasome complex, which triggers the maturation of pro-IL-1beta into IL-1beta through the action of caspase-1. Targets also host mitochondria and induces mitochondrial depolarization. In addition of its role as a viroporin, acts as a lipid raft adhesion factor. In terms of biological role, cysteine protease required for the proteolytic auto-cleavage between the non-structural proteins NS2 and NS3. The N-terminus of NS3 is required for the function of NS2 protease (active region NS2-3). Promotes the initiation of viral particle assembly by mediating the interaction between structural and non-structural proteins. Functionally, displays three enzymatic activities: serine protease with a chymotrypsin-like fold, NTPase and RNA helicase. NS3 serine protease, in association with NS4A, is responsible for the cleavages of NS3-NS4A, NS4A-NS4B, NS4B-NS5A and NS5A-NS5B. The NS3/NS4A complex prevents phosphorylation of host IRF3, thus preventing the establishment of dsRNA induced antiviral state. The NS3/NS4A complex induces host amino acid transporter component SLC3A2, thus contributing to HCV propagation. NS3 RNA helicase binds to RNA and unwinds both dsDNA and dsRNA in the 3' to 5' direction, and likely resolves RNA complicated stable secondary structures in the template strand. Binds a single ATP and catalyzes the unzipping of a single base pair of dsRNA. Inhibits host antiviral proteins TBK1 and IRF3 thereby preventing the establishment of an antiviral state. Cleaves host MAVS/CARDIF thereby preventing the establishment of an antiviral state. Cleaves host TICAM1/TRIF, thereby disrupting TLR3 signaling and preventing the establishment of an antiviral state. Its function is as follows. Peptide cofactor which forms a non-covalent complex with the N-terminal of NS3 serine protease. The NS3/NS4A complex prevents phosphorylation of host IRF3, thus preventing the establishment of dsRNA induced antiviral state. The NS3/NS4A complex induces host amino acid transporter component SLC3A2, thus contributing to HCV propagation. Induces a specific membrane alteration that serves as a scaffold for the virus replication complex. This membrane alteration gives rise to the so-called ER-derived membranous web that contains the replication complex. NS4B self-interaction contributes to its function in membranous web formation. Promotes host TRIF protein degradation in a CASP8-dependent manner thereby inhibiting host TLR3-mediated interferon signaling. Disrupts the interaction between STING and TBK1 contributing to the inhibition of interferon signaling. In terms of biological role, phosphorylated protein that is indispensable for viral replication and assembly. Both hypo- and hyperphosphorylated states are required for the viral life cycle. The hyperphosphorylated form of NS5A is an inhibitor of viral replication. Involved in RNA-binding and especially in binding to the viral genome. Zinc is essential for RNA-binding. Participates in the viral particle production as a result of its interaction with the viral mature core protein. Its interaction with host VAPB may target the viral replication complex to vesicles. Down-regulates viral IRES translation initiation. Mediates interferon resistance, presumably by interacting with and inhibiting host EIF2AK2/PKR. Prevents BIN1-induced apoptosis. Acts as a transcriptional activator of some host genes important for viral replication when localized in the nucleus. Via the interaction with host PACSIN2, modulates lipid droplet formation in order to promote virion assembly. Modulates TNFRSF21/DR6 signaling pathway for viral propagation. Functionally, RNA-dependent RNA polymerase that performs primer-template recognition and RNA synthesis during viral replication. Initiates RNA transcription/replication at a flavin adenine dinucleotide (FAD), resulting in a 5'- FAD cap on viral RNAs. In this way, recognition of viral 5' RNA by host pattern recognition receptors can be bypassed, thereby evading activation of antiviral pathways. This chain is Genome polyprotein, found in Hepatitis C virus genotype 1b (isolate BK) (HCV).